A 453-amino-acid chain; its full sequence is Secreted triacylglycerol lipase LIP3 (453 aa).

The first 19 residues, 1–19 (MKLGIVAFTLISFAAQALA), serve as a signal peptide directing secretion. The N-linked (GlcNAc...) asparagine glycan is linked to asparagine 98. A disulfide bond links cysteine 115 and cysteine 284. Catalysis depends on serine 197, which acts as the Nucleophile. N-linked (GlcNAc...) asparagine glycosylation occurs at asparagine 230. Catalysis depends on residues aspartate 344 and histidine 378. A disulfide bond links cysteine 360 and cysteine 406.

This sequence belongs to the AB hydrolase superfamily. Lipase family. Class Lip subfamily.

The protein localises to the secreted. It is found in the cell wall. It carries out the reaction a triacylglycerol + H2O = a diacylglycerol + a fatty acid + H(+). The catalysed reaction is a monoacylglycerol + H2O = glycerol + a fatty acid + H(+). It catalyses the reaction a diacylglycerol + H2O = a monoacylglycerol + a fatty acid + H(+). In terms of biological role, secreted lipase involved in Dandruff and seborrheic dermatitis (D/SD) probably via lipase-mediated breakdown of sebaceous lipids and release of irritating free fatty acids. Has triacylglycerol lipase activity and is able to hydrolyze triolein, tristearin, trilinolein, tripalmitoylglycerol and trihexadecenoin. Hydrolyzes diacylglycerols such as distearin, dilinolein, dipalmitoylglycerol and dipalmitolein. Mostly converts monoolein to di- and triolein, while free fatty acids are only produced in low amounts. The chain is Secreted triacylglycerol lipase LIP3 from Malassezia globosa (strain ATCC MYA-4612 / CBS 7966) (Dandruff-associated fungus).